A 128-amino-acid chain; its full sequence is Disintegrin ocellatusin (128 aa).

Positions 1–20 (MIPVLLVTICLAVFPFQGSS) are cleaved as a signal peptide. Residues 21–65 (IILESGNINDYEIVYPKKVAVLPTGAMNSAHPCYDPVTCQPKEKE) constitute a propeptide that is removed on maturation. The 87-residue stretch at 26–112 (GNINDYEIVY…DCPRNPYKGE (87 aa)) folds into the Disintegrin domain. Disulfide bonds link Cys53-Cys59, Cys67-Cys76, Cys72-Cys97, Cys73-Cys102, and Cys85-Cys104. The short motif at 89-91 (RGD) is the Cell attachment site element. The propeptide occupies 116–128 (MEWPAPAKGSVLM).

As to quaternary structure, monomer. Expressed by the venom gland.

The protein resides in the secreted. Functionally, the disintegrin ocellatusin-10c1 is a poor inhibitor of platelet aggregation. The disintegrin inhibits the adhesion of cells expressing the RGD-dependent integrin alpha-5/beta-1 (ITGA5/ITGB1) to immobilized fibronectin. Inhibition on alpha-2b/beta-3 (ITGA2B/ITGB3) is low, and there is no inhibition on alpha-1/beta-1 (ITGA1/ITGB1), alpha-2/beta-1 (ITGA2/ITGB1) and alpha-6/beta-1 (ITGA6/ITGB1). Its function is as follows. The short monomeric disintegrin ocellatusin inhibits ADP-induced platelet aggregation (IC(50)=168 nM). Inhibits alpha-5/beta-1 (ITGA5/ITGB1) integrin and induces the expression of a ligand-induced binding site epitope on beta-1 integrin subunit. Has a direct chemotactic stimulus on human neutrophils in vitro. This Echis ocellatus (Ocellated saw-scaled viper) protein is Disintegrin ocellatusin.